We begin with the raw amino-acid sequence, 206 residues long: tRNA (guanine-N(7)-)-methyltransferase (206 aa).

Residues E37, E62, D89, and D112 each contribute to the S-adenosyl-L-methionine site. D112 is a catalytic residue. Substrate contacts are provided by K116 and D148.

This sequence belongs to the class I-like SAM-binding methyltransferase superfamily. TrmB family.

The enzyme catalyses guanosine(46) in tRNA + S-adenosyl-L-methionine = N(7)-methylguanosine(46) in tRNA + S-adenosyl-L-homocysteine. It participates in tRNA modification; N(7)-methylguanine-tRNA biosynthesis. In terms of biological role, catalyzes the formation of N(7)-methylguanine at position 46 (m7G46) in tRNA. In Myxococcus xanthus (strain DK1622), this protein is tRNA (guanine-N(7)-)-methyltransferase.